Reading from the N-terminus, the 89-residue chain is Otospiralin (89 aa).

The first 21 residues, 1–21, serve as a signal peptide directing secretion; that stretch reads MQACMVPGLALCLLLGPLAGA.

Belongs to the otospiralin family. In terms of tissue distribution, ear specific.

The protein localises to the secreted. Functionally, may be essential for the survival of the neurosensory epithelium of the inner ear. This chain is Otospiralin (OTOS), found in Homo sapiens (Human).